The primary structure comprises 834 residues: Arf-GAP with coiled-coil, ANK repeat and PH domain-containing protein 3 (834 aa).

Residues 268–363 enclose the PH domain; it reads GVVMEGYLFK…WVQAVQASIA (96 aa). The interval 375–400 is disordered; sequence SERLDRTASPSTSSIDSATDTRERGV. The span at 382-392 shows a compositional bias: polar residues; the sequence is ASPSTSSIDSA. One can recognise an Arf-GAP domain in the interval 403–525; it reads ESVLQRVQSV…KFLRKAPMAP (123 aa). The C4-type zinc finger occupies 418-441; it reads CGDCGQPDPRWASINLGVLLCIEC. Residues 633–653 form a disordered region; the sequence is SVTEEEGAESEESSGEADGDT. The span at 634 to 653 shows a compositional bias: acidic residues; sequence VTEEEGAESEESSGEADGDT. ANK repeat units lie at residues 702–731, 735–764, and 768–797; these read EGKT…DVNQ, RGRA…DQHA, and EQRD…AEEM.

Its function is as follows. GTPase-activating protein for the ADP ribosylation factor family. This Homo sapiens (Human) protein is Arf-GAP with coiled-coil, ANK repeat and PH domain-containing protein 3 (ACAP3).